Reading from the N-terminus, the 146-residue chain is Ribonuclease H (146 aa).

An RNase H type-1 domain is found at 1–142 (MNKIIIYTDG…ADALANLAMD (142 aa)). Positions 9, 47, 70, and 134 each coordinate Mg(2+).

It belongs to the RNase H family. As to quaternary structure, monomer. The cofactor is Mg(2+).

It localises to the cytoplasm. It catalyses the reaction Endonucleolytic cleavage to 5'-phosphomonoester.. In terms of biological role, endonuclease that specifically degrades the RNA of RNA-DNA hybrids. The polypeptide is Ribonuclease H (Ruthia magnifica subsp. Calyptogena magnifica).